Here is a 47-residue protein sequence, read N- to C-terminus: Potassium channel toxin gamma-KTx 5.2 (47 aa).

4 disulfides stabilise this stretch: cysteine 5/cysteine 23, cysteine 11/cysteine 34, cysteine 20/cysteine 39, and cysteine 24/cysteine 41.

This sequence belongs to the ergtoxin family. Gamma-KTx 5 subfamily. In terms of tissue distribution, expressed by the venom gland.

Its subcellular location is the secreted. Its function is as follows. Reversibly blocks Kv11/ERG potassium channels. The protein is Potassium channel toxin gamma-KTx 5.2 of Centruroides gracilis (Slenderbrown scorpion).